The sequence spans 239 residues: uncharacterized protein (239 aa).

The first 19 residues, 1 to 19 (MPLLHRTIIFLQLLGTISS), serve as a signal peptide directing secretion. N-linked (GlcNAc...) asparagine glycans are attached at residues N44, N58, N72, N92, N109, N136, N172, N192, and N213.

It localises to the secreted. This is an uncharacterized protein from Caenorhabditis elegans.